Reading from the N-terminus, the 106-residue chain is Transcriptional and immune response regulator (106 aa).

As to quaternary structure, monomer. Interacts with NOTCH2 (via ANK repeats), the interaction inhibits the nuclear translocation of NOTCH2 N2ICD. Interacts (C-terminus) with CBY1 (C-terminus), TCIM competes with CTNNB1 for the interaction with CBY1. Expressed in liver, expression levels decrease in regenerating liver. In bone marrow, expressed in large progenitor-like cells, cells with ring-shaped nuclei and, at lower, levels in hematopietic stem cell-like cells with round nuclei (at protein level).

The protein resides in the cytoplasm. The protein localises to the nucleus. Its subcellular location is the nucleolus. It localises to the nucleus speckle. Seems to be involved in the regulation of cell growth an differentiation, may play different and opposite roles depending on the tissue or cell type. May enhance the WNT-CTNNB1 pathway by relieving antagonistic activity of CBY1. Enhances the proliferation of follicular dendritic cells. Plays a role in the mitogen-activated MAPK2/3 signaling pathway, positively regulates G1-to-S-phase transition of the cell cycle. In endothelial cells, enhances key inflammatory mediators and inflammatory response through the modulation of NF-kappaB transcriptional regulatory activity. Involved in the regulation of heat shock response, seems to play a positive feedback with HSF1 to modulate heat-shock downstream gene expression. Plays a role in the regulation of hematopoiesis even if the mechanisms are unknown. In cancers such as thyroid or lung cancer, it has been described as promoter of cell proliferation, G1-to-S-phase transition and inhibitor of apoptosis. However, it negatively regulates self-renewal of liver cancer cells via suppresion of NOTCH2 signaling. The protein is Transcriptional and immune response regulator of Mus musculus (Mouse).